The following is a 450-amino-acid chain: Runt-related transcription factor 1 (450 aa).

Residues 1 to 25 (MRIPVDASTSRRFTPPSTALSPGKM) are disordered. Polar residues predominate over residues 7–20 (ASTSRRFTPPSTAL). Threonine 14 is subject to Phosphothreonine. Serine 21 carries the phosphoserine modification. Residues lysine 24 and lysine 43 each carry the N6-acetyllysine modification. One can recognise a Runt domain in the interval 50–178 (SMVEVLADHP…TVDGPREPRR (129 aa)). Residues 80–84 (RCNKT) form an interaction with DNA region. Residues asparagine 112, glutamate 116, arginine 139, and valine 170 each coordinate chloride. Interaction with DNA stretches follow at residues 135–143 (RFVGRSGRG) and 168–177 (ITVDGPREPR). 2 disordered regions span residues 170–195 (VDGP…LSFS) and 209–252 (MRVS…SPPW). Phosphoserine is present on residues serine 193 and serine 212. Residues 222–247 (PRASLNHSTAFNPQPQSQMQDARQIQ) show a composition bias toward polar residues. Serine 249 is modified (phosphoserine; by HIPK2). Residues serine 266 and serine 267 each carry the phosphoserine modification. Phosphothreonine; by HIPK2 is present on threonine 272. The residue at position 275 (serine 275) is a Phosphoserine; by HIPK2. The segment at 290–369 (SSRLSTAPDL…SQAQAGPFQT (80 aa)) is interaction with KAT6A. Phosphothreonine is present on threonine 295. The interaction with KAT6B stretch occupies residues 306-398 (RQFPTLPSIS…MVGGERSPPR (93 aa)). The interaction with FOXP3 stretch occupies residues 360 to 400 (SQAQAGPFQTGSPSYHLYYGTSAGSYQFSMVGGERSPPRIL). Positions 410 to 450 (AALLNPSLPSQSDVVETEGSHSNSPTNMPPARLEEAVWRPY) are disordered. Positions 416 to 435 (SLPSQSDVVETEGSHSNSPT) are enriched in polar residues. Serine 433 is subject to Phosphoserine. A compositionally biased stretch (basic and acidic residues) spans 441–450 (RLEEAVWRPY).

As to quaternary structure, heterodimer with CBFB. RUNX1 binds DNA as a monomer and through the Runt domain. DNA-binding is increased by heterodimerization. Interacts with TLE1 and ALYREF/THOC4. Interacts with ELF1, ELF2 and SPI1. Interacts via its Runt domain with the ELF4 N-terminal region. Interaction with ELF2 isoform 2 (NERF-1a) may act to repress RUNX1-mediated transactivation. Interacts with KAT6A and KAT6B. Interacts with SUV39H1, leading to abrogation of transactivating and DNA-binding properties of RUNX1. Interacts with YAP1 and HIPK2. Interaction with CDK6 prevents myeloid differentiation, reducing its transcription transactivation activity. Found in a complex with PRMT5, RUNX1 and CBFB. Interacts with FOXP3. Interacts with TBX21. Interacts with DPF2. In terms of processing, phosphorylated in its C-terminus upon IL-6 treatment. Phosphorylation enhances interaction with KAT6A. Methylated. Post-translationally, phosphorylated in Ser-249 Thr-272 and Ser-275 by HIPK2 when associated with CBFB and DNA. This phosphorylation promotes subsequent EP300 phosphorylation. Expressed in skeletal muscle.

Its subcellular location is the nucleus. Its function is as follows. CBF binds to the core site, 5'-PYGPYGGT-3', of a number of enhancers and promoters, including murine leukemia virus, polyomavirus enhancer, T-cell receptor enhancers, LCK, IL-3 and GM-CSF promoters. The alpha subunit binds DNA and appears to have a role in the development of normal hematopoiesis. Isoform AML-1L interferes with the transactivation activity of RUNX1. Acts synergistically with ELF4 to transactivate the IL-3 promoter and with ELF2 to transactivate the BLK promoter. Inhibits KAT6B-dependent transcriptional activation. Controls the anergy and suppressive function of regulatory T-cells (Treg) by associating with FOXP3. Activates the expression of IL2 and IFNG and down-regulates the expression of TNFRSF18, IL2RA and CTLA4, in conventional T-cells. Positively regulates the expression of RORC in T-helper 17 cells. This is Runt-related transcription factor 1 (Runx1) from Rattus norvegicus (Rat).